A 536-amino-acid chain; its full sequence is MERSGSGVLSRSRAKTVTNGNSQHSEEESSDEEHPNDSMIRVGGDYQAQIPEFKPDCASRYGEKDQRSMLVWSPNSQVSDAMLDEYILMAKEKHGYNMEQALGMLLWHKHDVEKSLADLANFTPFPDEWTVEDKVLFEQAFSFHGKSFHRIQQMLPDKMITSLVKYYYSWKKTRTRTSVMDRQARKLLSKREKNESNDEIEEGDPGSDSDFEINAKKESAKQNSGNGGGNEKGPSKSCLTRKENQSAQYRHHPLRARRRPPKGMHLEQEDIVALSASTDSGAVTIRQLDTQLVSLKRQVQKIKQTNSVLRNNLGDGIEDMRPREPNQKINSRWTTEEQLLAVQAVRRYGKDFAAIADVIGNKTVAQVSSFFVSYRRRFNLEEVLREWQAEQEVQGSSGRTVNTELNGSAELEDDEVKMDGISPPHSDSPLPSSEGSASGNHSSAQSSPPLTQPPPLLRPAPPSAPPSLLRQPPPLQTRPLQNRTPHNHPPPPLIRPAIASTLHQGALRNSLSSSSSSAGQLPPSLVGLKVESPQSH.

The interval 1 to 44 (MERSGSGVLSRSRAKTVTNGNSQHSEEESSDEEHPNDSMIRVGG) is disordered. The span at 24–36 (HSEEESSDEEHPN) shows a compositional bias: basic and acidic residues. Positions 38 to 123 (SMIRVGGDYQ…KSLADLANFT (86 aa)) constitute an ELM2 domain. An SANT 1 domain is found at 124-175 (PFPDEWTVEDKVLFEQAFSFHGKSFHRIQQMLPDKMITSLVKYYYSWKKTRT). The tract at residues 179–264 (VMDRQARKLL…RARRRPPKGM (86 aa)) is disordered. Residues 197–211 (NDEIEEGDPGSDSDF) are compositionally biased toward acidic residues. Positions 249–262 (YRHHPLRARRRPPK) are enriched in basic residues. A coiled-coil region spans residues 283-315 (VTIRQLDTQLVSLKRQVQKIKQTNSVLRNNLGD). The SANT 2 domain occupies 328 to 379 (KINSRWTTEEQLLAVQAVRRYGKDFAAIADVIGNKTVAQVSSFFVSYRRRFN). The disordered stretch occupies residues 389-536 (AEQEVQGSSG…GLKVESPQSH (148 aa)). A compositionally biased stretch (polar residues) spans 391 to 406 (QEVQGSSGRTVNTELN). A compositionally biased stretch (low complexity) spans 422–449 (SPPHSDSPLPSSEGSASGNHSSAQSSPP). A compositionally biased stretch (pro residues) spans 450-476 (LTQPPPLLRPAPPSAPPSLLRQPPPLQ).

The protein belongs to the CoREST family.

The protein localises to the nucleus. Functionally, may act as a component of a corepressor complex that represses transcription. This is REST corepressor 2 (rcor2) from Danio rerio (Zebrafish).